We begin with the raw amino-acid sequence, 223 residues long: Ribosomal RNA small subunit methyltransferase G (223 aa).

S-adenosyl-L-methionine contacts are provided by residues Gly-83, Leu-88, 134–135 (AE), and Arg-152.

This sequence belongs to the methyltransferase superfamily. RNA methyltransferase RsmG family.

It is found in the cytoplasm. Its function is as follows. Specifically methylates the N7 position of guanine in position 518 of 16S rRNA. The polypeptide is Ribosomal RNA small subunit methyltransferase G (Corynebacterium diphtheriae (strain ATCC 700971 / NCTC 13129 / Biotype gravis)).